A 158-amino-acid polypeptide reads, in one-letter code: Transcriptional repressor NrdR (158 aa).

Residues 3 to 34 (CPYCGFEESKVVDSRSTEDHKAIRRRRECLKC) fold into a zinc finger. The ATP-cone domain maps to 49–139 (VLVIKRDSNR…VYRQFKDINT (91 aa)).

The protein belongs to the NrdR family. Zn(2+) serves as cofactor.

Its function is as follows. Negatively regulates transcription of bacterial ribonucleotide reductase nrd genes and operons by binding to NrdR-boxes. The chain is Transcriptional repressor NrdR from Clostridium novyi (strain NT).